Reading from the N-terminus, the 391-residue chain is Formate-dependent phosphoribosylglycinamide formyltransferase (391 aa).

N(1)-(5-phospho-beta-D-ribosyl)glycinamide is bound by residues 20-21 (EL) and Glu-80. ATP-binding positions include Arg-112, Lys-153, 158-163 (SSGKGQ), 193-196 (EGFI), and Glu-201. The ATP-grasp domain occupies 117-306 (RLAAEELGLT…EFALHVRAFT (190 aa)). The Mg(2+) site is built by Glu-265 and Glu-277. N(1)-(5-phospho-beta-D-ribosyl)glycinamide contacts are provided by residues Asp-284, Lys-354, and 361 to 362 (RR).

The protein belongs to the PurK/PurT family. Homodimer.

It catalyses the reaction N(1)-(5-phospho-beta-D-ribosyl)glycinamide + formate + ATP = N(2)-formyl-N(1)-(5-phospho-beta-D-ribosyl)glycinamide + ADP + phosphate + H(+). Its pathway is purine metabolism; IMP biosynthesis via de novo pathway; N(2)-formyl-N(1)-(5-phospho-D-ribosyl)glycinamide from N(1)-(5-phospho-D-ribosyl)glycinamide (formate route): step 1/1. In terms of biological role, involved in the de novo purine biosynthesis. Catalyzes the transfer of formate to 5-phospho-ribosyl-glycinamide (GAR), producing 5-phospho-ribosyl-N-formylglycinamide (FGAR). Formate is provided by PurU via hydrolysis of 10-formyl-tetrahydrofolate. This is Formate-dependent phosphoribosylglycinamide formyltransferase from Vibrio vulnificus (strain CMCP6).